A 561-amino-acid polypeptide reads, in one-letter code: Potassium-transporting ATPase potassium-binding subunit (561 aa).

A run of 10 helical transmembrane segments spans residues 4–24 (IVMQ…PLGI), 65–85 (AVSV…VLML), 133–153 (IGLT…LFAV), 177–197 (LYIL…QGVV), 253–273 (FTNL…VVMF), 285–305 (AIMT…TISE), 380–400 (GLYG…LLVG), 417–437 (MVCL…AVAV), 484–504 (MVGA…ALYL), and 528–548 (FIGL…LPAL).

This sequence belongs to the KdpA family. As to quaternary structure, the system is composed of three essential subunits: KdpA, KdpB and KdpC.

It localises to the cell membrane. Functionally, part of the high-affinity ATP-driven potassium transport (or Kdp) system, which catalyzes the hydrolysis of ATP coupled with the electrogenic transport of potassium into the cytoplasm. This subunit binds the extracellular potassium ions and delivers the ions to the membrane domain of KdpB through an intramembrane tunnel. The sequence is that of Potassium-transporting ATPase potassium-binding subunit from Listeria monocytogenes serovar 1/2a (strain ATCC BAA-679 / EGD-e).